Reading from the N-terminus, the 252-residue chain is Spermatogenesis-associated protein 9 (252 aa).

The helical transmembrane segment at 145-167 threads the bilayer; sequence TSIMYASYAALIYLAVCVNAVLA. Positions 208–221 are enriched in basic and acidic residues; sequence KAKPYRSLPEKPDN. The interval 208–235 is disordered; it reads KAKPYRSLPEKPDNLLDQPKPPANKQSN.

Its subcellular location is the membrane. Its function is as follows. May play at role in testicular development/spermatogenesis and may be an important factor in male infertility. This is Spermatogenesis-associated protein 9 (Spata9) from Mus musculus (Mouse).